We begin with the raw amino-acid sequence, 570 residues long: Methyl-coenzyme M reductase subunit alpha (570 aa).

Q161 contacts coenzyme F430. Coenzyme B contacts are provided by residues R239, K270–H271, and R284. H271 bears the Pros-methylhistidine mark. 5-methylarginine is present on R285. Residues Y346 and F464 each coordinate coenzyme M. At G465 the chain carries 1-thioglycine. D470 carries the (Z)-2,3-didehydroaspartate modification. C472 is modified (S-methylcysteine).

Belongs to the methyl-coenzyme M reductase alpha subunit family. In terms of assembly, MCR is a hexamer of two alpha, two beta, and two gamma chains, forming a dimer of heterotrimers. Requires coenzyme F430 as cofactor. Post-translationally, the alpha subunit contains five modified amino acids near the active site region. Is methylated on His-271, Arg-285 and Cys-472, probably by the action of specific S-adenosylmethionine-dependent methyltransferases. Also contains a thioglycine at position 465, forming a thiopeptide bond. Contains a didehydroaspartate residue at position 470. The methylation on C5 of Arg-285 is a post-translational methylation not essential in vivo, but which plays a role for the stability and structural integrity of MCR. Does not show a methylation at Gln-420, as shown for M.marburgensis.

Its subcellular location is the cytoplasm. It carries out the reaction coenzyme B + methyl-coenzyme M = methane + coenzyme M-coenzyme B heterodisulfide. It functions in the pathway one-carbon metabolism; methyl-coenzyme M reduction; methane from methyl-coenzyme M: step 1/1. Its function is as follows. Component of the methyl-coenzyme M reductase (MCR) I that catalyzes the reductive cleavage of methyl-coenzyme M (CoM-S-CH3 or 2-(methylthio)ethanesulfonate) using coenzyme B (CoB or 7-mercaptoheptanoylthreonine phosphate) as reductant which results in the production of methane and the mixed heterodisulfide of CoB and CoM (CoM-S-S-CoB). This is the final step in methanogenesis. The protein is Methyl-coenzyme M reductase subunit alpha (mcrA) of Methanosarcina barkeri (strain Fusaro / DSM 804).